We begin with the raw amino-acid sequence, 458 residues long: Alpha-2C adrenergic receptor (458 aa).

Topologically, residues 1–51 (MASPALAAALAAAAAEGPNGSDAGEWGSGGGANASGTDWGPPPGQYSAGAV) are extracellular. N-linked (GlcNAc...) asparagine glycosylation is found at asparagine 19 and asparagine 33. Residues 52–76 (AGLAAVVGFLIVFTVVGNVLVVIAV) traverse the membrane as a helical segment. Residues 77–88 (LTSRALRAPQNL) lie on the Cytoplasmic side of the membrane. The chain crosses the membrane as a helical span at residues 89 to 114 (FLVSLASADILVATLVMPFSLANELM). At 115-124 (AYWYFGQVWC) the chain is on the extracellular side. Cysteines 124 and 202 form a disulfide. Residues 125 to 147 (GVYLALDVLFCTSSIVHLCAISL) traverse the membrane as a helical segment. At 148-168 (DRYWSVTQAVEYNLKRTPRRV) the chain is on the cytoplasmic side. The chain crosses the membrane as a helical span at residues 169-191 (KATIVAVWLISAVISFPPLVSFY). Residues 192–207 (RRPDGAAYPQCGLNDE) lie on the Extracellular side of the membrane. A helical membrane pass occupies residues 208 to 231 (TWYILSSCIGSFFAPCLIMGLVYA). The Cytoplasmic segment spans residues 232–379 (RIYRVAKLRT…QAREKRFTFV (148 aa)). Positions 245–343 (SEKRGPAGPD…SPGPGGRLSR (99 aa)) are disordered. Positions 291–303 (RRRRRGALRRGGR) are enriched in basic residues. The chain crosses the membrane as a helical span at residues 380-403 (LAVVMGVFVLCWFPFFFSYSLYGI). Residues 404–416 (CREACQLPEPLFK) lie on the Extracellular side of the membrane. A helical membrane pass occupies residues 417 to 437 (FFFWIGYCNSSLNPVIYTVFN). Topologically, residues 438-458 (QDFRRSFKHILFRRRRRGFRQ) are cytoplasmic.

The protein belongs to the G-protein coupled receptor 1 family. Adrenergic receptor subfamily. ADRA2C sub-subfamily.

The protein resides in the cell membrane. Alpha-2 adrenergic receptors mediate the catecholamine-induced inhibition of adenylate cyclase through the action of G proteins. In Rattus norvegicus (Rat), this protein is Alpha-2C adrenergic receptor (Adra2c).